The chain runs to 343 residues: Anthranilate phosphoribosyltransferase (343 aa).

Residues Gly-78, Gly-81–Asp-82, Thr-86, Asn-88–Thr-91, Lys-106–Ser-114, and Ser-118 each bind 5-phospho-alpha-D-ribose 1-diphosphate. Anthranilate is bound at residue Gly-78. Ser-90 serves as a coordination point for Mg(2+). Asn-109 contributes to the anthranilate binding site. Anthranilate is bound at residue Arg-164. Mg(2+) is bound by residues Asp-223 and Glu-224.

This sequence belongs to the anthranilate phosphoribosyltransferase family. Homodimer. Mg(2+) serves as cofactor.

The enzyme catalyses N-(5-phospho-beta-D-ribosyl)anthranilate + diphosphate = 5-phospho-alpha-D-ribose 1-diphosphate + anthranilate. It participates in amino-acid biosynthesis; L-tryptophan biosynthesis; L-tryptophan from chorismate: step 2/5. Functionally, catalyzes the transfer of the phosphoribosyl group of 5-phosphorylribose-1-pyrophosphate (PRPP) to anthranilate to yield N-(5'-phosphoribosyl)-anthranilate (PRA). The protein is Anthranilate phosphoribosyltransferase of Chlamydia felis (strain Fe/C-56) (Chlamydophila felis).